The chain runs to 201 residues: Small ribosomal subunit protein uS4c (201 aa).

The disordered stretch occupies residues 20 to 44; sequence GLTNKKPRAGSDLRNQSRSGKKSQY. The 62-residue stretch at 89–150 folds into the S4 RNA-binding domain; sequence MRLDNILFRL…EQKSKALIQI (62 aa).

Belongs to the universal ribosomal protein uS4 family. In terms of assembly, part of the 30S ribosomal subunit. Contacts protein S5. The interaction surface between S4 and S5 is involved in control of translational fidelity.

It is found in the plastid. Its subcellular location is the chloroplast. Functionally, one of the primary rRNA binding proteins, it binds directly to 16S rRNA where it nucleates assembly of the body of the 30S subunit. Its function is as follows. With S5 and S12 plays an important role in translational accuracy. The chain is Small ribosomal subunit protein uS4c (rps4) from Nicotiana tomentosiformis (Tobacco).